We begin with the raw amino-acid sequence, 592 residues long: Putative amidase ARB_02965 (592 aa).

Residues 1–21 (MKGPITFLLQLGAVYTSIASA) form the signal peptide. A glycan (N-linked (GlcNAc...) asparagine) is linked at asparagine 120. Lysine 161 functions as the Charge relay system in the catalytic mechanism. A glycan (N-linked (GlcNAc...) asparagine) is linked at asparagine 217. Serine 242 (charge relay system) is an active-site residue. Residues serine 242 and 263–266 (TSGS) contribute to the substrate site. The active-site Acyl-ester intermediate is the serine 266. N-linked (GlcNAc...) asparagine glycans are attached at residues asparagine 326, asparagine 430, and asparagine 528.

Belongs to the amidase family.

The protein resides in the secreted. The protein is Putative amidase ARB_02965 of Arthroderma benhamiae (strain ATCC MYA-4681 / CBS 112371) (Trichophyton mentagrophytes).